We begin with the raw amino-acid sequence, 276 residues long: MDFWTAFQAIILGVVEGLTEFLPISSTGHQIIVADLIGFGGERAMAFNIIIQLAAILAVVWEFRGKILEVVFGLTSQPKARRFTGNLLLAFMPAVVLGVLFADLIHEYLFNPITVATALVVGGVIMLWAERREHRVQVDHVDDMRWSHALKIGFVQCLAMIPGTSRSGSTIIGGLLFGLSRKAATEFSFFLAMPTMVGAAVYSGYKYRDLFQPADLPVFAIGFVTSFIFAMIAVRALLKFIANHSYAAFAWYRIVFGLLILATWQFGWVDWSTAHG.

6 consecutive transmembrane segments (helical) span residues 43-63, 85-105, 109-129, 183-203, 214-234, and 249-269; these read RAMAFNIIIQLAAILAVVWEF, GNLLLAFMPAVVLGVLFADLI, LFNPITVATALVVGGVIMLWA, AATEFSFFLAMPTMVGAAVYS, ADLPVFAIGFVTSFIFAMIAV, and FAWYRIVFGLLILATWQFGWV.

The protein belongs to the UppP family.

Its subcellular location is the cell inner membrane. The enzyme catalyses di-trans,octa-cis-undecaprenyl diphosphate + H2O = di-trans,octa-cis-undecaprenyl phosphate + phosphate + H(+). Catalyzes the dephosphorylation of undecaprenyl diphosphate (UPP). Confers resistance to bacitracin. The protein is Undecaprenyl-diphosphatase of Pseudomonas putida (strain GB-1).